The sequence spans 728 residues: MGLLALGTALDWPDAKQQAHLVRAWGIKQLLEIWNKAKGKERDAMLWGDEIEYLVVNYSKDEPKVLLSLRQADILKALADSKTLKVTGDCAPGTEANADAGNVTLPVFHPEFGRFMLEATPGKPWGIDFKDLLTVEADMKLRRCIAKDHMLSNEHPITLTTFPRIGSPGVFTEPSYPVSGPKLRSQFVPDEIANPHIRFPTLAANIRSRRGRKVQVNVPVFRDENTPWPWKDPTVNYDLHNWPEDDDVRNGAAPDNFIHMDAMAFGMGSCCLQITFQAKNITEGRKMYDQLSPLGPILLALTAATPVYKGFIADTDVRWNQISRAVDDRTPEELGEKPLKNDRWRIPKSRYASNSTYISTDSRLRPEYMDPNLVIDPEIKQQLLDGGMDDRLATHFAHLFIRDPIVIFNEDLQELDLTKTDHFENIQSTNWQHMRFKPPPADNSIGWRVEFRPMEIQITDFENAAFSVFIVLITRAILSFDLNFYIPIVKVDENMETAHARNANLEKKFWFRKNPFPVRTTRRGGSASRSASGTSTPNSGSSRPATPPLGPVEDEYRLMSVNEVINGTAYAKATSKEVTEDAEEGEEFPGLIPLVESYLDSVNMDVATRCGLARYLDLIRKRASGELWTAAKWIREFIAKHPGYKKDSVVSEEITKDLVGAVIEIGEREKRGLGIDDLIGQVPDLEKLFGGFLKGKSPCGGGQAALEQKLKDDDAKVNGVKRKFNEEQ.

Residues 517-552 are disordered; the sequence is PVRTTRRGGSASRSASGTSTPNSGSSRPATPPLGPV. Residues 523–536 show a composition bias toward low complexity; that stretch reads RGGSASRSASGTST.

The protein belongs to the glutamate--cysteine ligase type 3 family.

The catalysed reaction is L-cysteine + L-glutamate + ATP = gamma-L-glutamyl-L-cysteine + ADP + phosphate + H(+). The protein operates within sulfur metabolism; glutathione biosynthesis; glutathione from L-cysteine and L-glutamate: step 1/2. The polypeptide is Glutamate--cysteine ligase (gcs-1) (Neurospora crassa (strain ATCC 24698 / 74-OR23-1A / CBS 708.71 / DSM 1257 / FGSC 987)).